A 230-amino-acid polypeptide reads, in one-letter code: UPF0500 protein C1orf216 homolog (230 aa).

The tract at residues 1 to 103 is disordered; the sequence is MFAAIQPGLA…AEPEKLSGAS (103 aa). Residues 60 to 73 are compositionally biased toward polar residues; sequence RSSSESPSDNQVFQ. A compositionally biased stretch (low complexity) spans 85–94; the sequence is PPEGAEIPGA.

Belongs to the UPF0500 family.

This chain is UPF0500 protein C1orf216 homolog, found in Mus musculus (Mouse).